The primary structure comprises 60 residues: Large ribosomal subunit protein bL32 (60 aa).

This sequence belongs to the bacterial ribosomal protein bL32 family.

This chain is Large ribosomal subunit protein bL32, found in Streptococcus pneumoniae serotype 4 (strain ATCC BAA-334 / TIGR4).